A 185-amino-acid polypeptide reads, in one-letter code: UPF0669 protein C6orf120 homolog (185 aa).

The N-terminal stretch at methionine 1–cysteine 23 is a signal peptide. A glycan (N-linked (GlcNAc...) asparagine) is linked at asparagine 47.

This sequence belongs to the UPF0669 family.

It localises to the secreted. Its function is as follows. May be involved in induction of apoptosis in CD4(+) T-cells, but not CD8(+) T-cells or hepatocytes. The chain is UPF0669 protein C6orf120 homolog from Rattus norvegicus (Rat).